Reading from the N-terminus, the 282-residue chain is 2-dehydro-3-deoxyphosphooctonate aldolase (282 aa).

The protein belongs to the KdsA family.

It localises to the cytoplasm. The catalysed reaction is D-arabinose 5-phosphate + phosphoenolpyruvate + H2O = 3-deoxy-alpha-D-manno-2-octulosonate-8-phosphate + phosphate. The protein operates within carbohydrate biosynthesis; 3-deoxy-D-manno-octulosonate biosynthesis; 3-deoxy-D-manno-octulosonate from D-ribulose 5-phosphate: step 2/3. It participates in bacterial outer membrane biogenesis; lipopolysaccharide biosynthesis. The polypeptide is 2-dehydro-3-deoxyphosphooctonate aldolase (Shewanella sp. (strain ANA-3)).